The primary structure comprises 572 residues: ATP-dependent lipid A-core flippase (572 aa).

5 helical membrane-spanning segments follow: residues 14 to 34, 55 to 75, 148 to 168, 249 to 269, and 272 to 292; these read IIPYKIPLFIAMFAMIVVAAL, VFFLQILPLIIIAIFFTKGVL, IFLLGVIFYMNWKLALICFLI, MEIIGGFAVAGIIWVGGSEVI, and SATPGTFFAFLTAMITAYDPV. One can recognise an ABC transmembrane type-1 domain in the interval 22–304; it reads FIAMFAMIVV…VSQVNSTIQQ (283 aa). An ABC transporter domain is found at 338-571; the sequence is IEFHDVSFSY…EGEYQLLYNM (234 aa). 370–377 provides a ligand contact to ATP; it reads GPSGGGKT.

It belongs to the ABC transporter superfamily. Lipid exporter (TC 3.A.1.106) family. In terms of assembly, homodimer.

The protein localises to the cell inner membrane. It catalyses the reaction ATP + H2O + lipid A-core oligosaccharideSide 1 = ADP + phosphate + lipid A-core oligosaccharideSide 2.. Its function is as follows. Involved in lipopolysaccharide (LPS) biosynthesis. Translocates lipid A-core from the inner to the outer leaflet of the inner membrane. Transmembrane domains (TMD) form a pore in the inner membrane and the ATP-binding domain (NBD) is responsible for energy generation. This is ATP-dependent lipid A-core flippase from Desulfotalea psychrophila (strain LSv54 / DSM 12343).